Consider the following 227-residue polypeptide: Enolase-phosphatase E1 (227 aa).

Belongs to the HAD-like hydrolase superfamily. MasA/MtnC family. In terms of assembly, monomer. It depends on Mg(2+) as a cofactor.

The catalysed reaction is 5-methylsulfanyl-2,3-dioxopentyl phosphate + H2O = 1,2-dihydroxy-5-(methylsulfanyl)pent-1-en-3-one + phosphate. It participates in amino-acid biosynthesis; L-methionine biosynthesis via salvage pathway; L-methionine from S-methyl-5-thio-alpha-D-ribose 1-phosphate: step 3/6. Its pathway is amino-acid biosynthesis; L-methionine biosynthesis via salvage pathway; L-methionine from S-methyl-5-thio-alpha-D-ribose 1-phosphate: step 4/6. In terms of biological role, bifunctional enzyme that catalyzes the enolization of 2,3-diketo-5-methylthiopentyl-1-phosphate (DK-MTP-1-P) into the intermediate 2-hydroxy-3-keto-5-methylthiopentenyl-1-phosphate (HK-MTPenyl-1-P), which is then dephosphorylated to form the acireductone 1,2-dihydroxy-3-keto-5-methylthiopentene (DHK-MTPene). This chain is Enolase-phosphatase E1, found in Pseudomonas syringae pv. tomato (strain ATCC BAA-871 / DC3000).